The following is a 280-amino-acid chain: Transcription factor HES-1 (280 aa).

The tract at residues 1–44 is disordered; sequence MPADIMEKNSSSPVAATPASVNTTPDKPKTASEHRKSSKPIMEK. Residues 10–21 are compositionally biased toward low complexity; that stretch reads SSSPVAATPASV. Basic and acidic residues predominate over residues 26–35; sequence DKPKTASEHR. Positions 34–91 constitute a bHLH domain; the sequence is HRKSSKPIMEKRRRARINESLSQLKTLILDALKKDSSRHSKLEKADILEMTVKHLRNL. An Orange domain is found at 110–143; the sequence is YRAGFSECMNEVTRFLSTCEGVNTEVRTRLLGHL. Disordered stretches follow at residues 157–200 and 254–280; these read GQPH…PPGG and TSVG…PWRN. Composition is skewed to pro residues over residues 164–174 and 181–200; these read QAPPPPPPGPG and FAPP…PPGG. Residues 254-271 are compositionally biased toward polar residues; that stretch reads TSVGPNAVSPSSGPSLTA. A WRPW motif motif is present at residues 275 to 278; it reads WRPW.

Transcription repression requires formation of a complex with a corepressor protein of the Groucho/TLE family. Interacts with SIRT1. Interacts (via WPRW motif) with TLE1, and more weakly with TLE2. Interacts with HES6. Interacts with an FA complex, composed of FANCA, FANCF, FANCG and FANCL, but not of FANCC, nor FANCE.

Its subcellular location is the nucleus. Functionally, transcriptional repressor of genes that require a bHLH protein for their transcription. May act as a negative regulator of myogenesis by inhibiting the functions of MYOD1 and ASH1. Binds DNA on N-box motifs: 5'-CACNAG-3' with high affinity and on E-box motifs: 5'-CANNTG-3' with low affinity. May play a role in a functional FA core complex response to DNA cross-link damage, being required for the stability and nuclear localization of FA core complex proteins, as well as for FANCD2 monoubiquitination in response to DNA damage. This Bos taurus (Bovine) protein is Transcription factor HES-1 (HES1).